Reading from the N-terminus, the 461-residue chain is CUGBP Elav-like family member 3 (461 aa).

RRM domains follow at residues Ile7–Ser88 and Arg95–Thr175. A compositionally biased stretch (pro residues) spans Pro345–Gln358. Positions Pro345–Gly375 are disordered. The span at Gln359–Gln369 shows a compositional bias: low complexity. Positions Cys376–Pro454 constitute an RRM 3 domain.

The protein belongs to the CELF/BRUNOL family.

It localises to the nucleus. Its subcellular location is the cytoplasm. Its function is as follows. RNA-binding protein involved in the regulation of pre-mRNA alternative splicing. Mediates exon inclusion and/or exclusion in pre-mRNA that are subject to tissue-specific and developmentally regulated alternative splicing. Specifically activates exon 5 inclusion of cardiac isoforms of TNNT2 during heart remodeling at the juvenile to adult transition. Activates the splicing of MAPT/Tau exon 10. Binds to muscle-specific splicing enhancer (MSE) intronic sites flanking the alternative exon 5 of TNNT2 pre-mRNA. The sequence is that of CUGBP Elav-like family member 3 (CELF3) from Bos taurus (Bovine).